Reading from the N-terminus, the 215-residue chain is Transmembrane protein 267 (215 aa).

The next 3 helical transmembrane spans lie at 77–97 (FGEI…HFLL), 114–134 (FLHC…TMHF), and 178–198 (FWLY…VMYF).

It localises to the membrane. In Bos taurus (Bovine), this protein is Transmembrane protein 267 (TMEM267).